The sequence spans 447 residues: Methyl-coenzyme M reductase II subunit beta (447 aa).

Coenzyme M is bound at residue Tyr-368. A coenzyme B-binding site is contributed by Gly-370.

Belongs to the methyl-coenzyme M reductase beta subunit family. MCR is a hexamer of two alpha, two beta, and two gamma chains, forming a dimer of heterotrimers. The cofactor is coenzyme F430.

It catalyses the reaction coenzyme B + methyl-coenzyme M = methane + coenzyme M-coenzyme B heterodisulfide. Its pathway is one-carbon metabolism; methyl-coenzyme M reduction; methane from methyl-coenzyme M: step 1/1. Functionally, component of the methyl-coenzyme M reductase (MCR) I that catalyzes the reductive cleavage of methyl-coenzyme M (CoM-S-CH3 or 2-(methylthio)ethanesulfonate) using coenzyme B (CoB or 7-mercaptoheptanoylthreonine phosphate) as reductant which results in the production of methane and the mixed heterodisulfide of CoB and CoM (CoM-S-S-CoB). This is the final step in methanogenesis. The chain is Methyl-coenzyme M reductase II subunit beta (mrtB) from Methanocaldococcus jannaschii (strain ATCC 43067 / DSM 2661 / JAL-1 / JCM 10045 / NBRC 100440) (Methanococcus jannaschii).